We begin with the raw amino-acid sequence, 404 residues long: Exodeoxyribonuclease 7 large subunit (404 aa).

Belongs to the XseA family. Heterooligomer composed of large and small subunits.

It is found in the cytoplasm. It catalyses the reaction Exonucleolytic cleavage in either 5'- to 3'- or 3'- to 5'-direction to yield nucleoside 5'-phosphates.. Its function is as follows. Bidirectionally degrades single-stranded DNA into large acid-insoluble oligonucleotides, which are then degraded further into small acid-soluble oligonucleotides. The polypeptide is Exodeoxyribonuclease 7 large subunit (Mesoplasma florum (strain ATCC 33453 / NBRC 100688 / NCTC 11704 / L1) (Acholeplasma florum)).